The chain runs to 211 residues: Thymidylate kinase (211 aa).

Residue 10–17 (GGDGVGKS) participates in ATP binding.

The protein belongs to the thymidylate kinase family.

It carries out the reaction dTMP + ATP = dTDP + ADP. Its function is as follows. Phosphorylation of dTMP to form dTDP in both de novo and salvage pathways of dTTP synthesis. This is Thymidylate kinase from Clavibacter sepedonicus (Clavibacter michiganensis subsp. sepedonicus).